Reading from the N-terminus, the 169-residue chain is MSTTQSERLRELLEPLVGSQGLDLEGIEVESVGRKRVLRVVVDSDEGADLDAIADVSRALSAKLDETDAMGEGEYTLEVGTPGAERALTEHRHYVRAVDRLVRFQLTEGDELVARILTVDDAGLDLEVPGVKGRKATTRRLAFEDIAKARVQVEFNRKDKKDMTEEEEA.

It belongs to the RimP family.

It is found in the cytoplasm. Required for maturation of 30S ribosomal subunits. The chain is Ribosome maturation factor RimP from Streptomyces avermitilis (strain ATCC 31267 / DSM 46492 / JCM 5070 / NBRC 14893 / NCIMB 12804 / NRRL 8165 / MA-4680).